The chain runs to 439 residues: Glucose-1-phosphate adenylyltransferase (439 aa).

Residues Y116, G182, 197-198 (EK), and S215 each bind alpha-D-glucose 1-phosphate.

The protein belongs to the bacterial/plant glucose-1-phosphate adenylyltransferase family. As to quaternary structure, homotetramer.

It carries out the reaction alpha-D-glucose 1-phosphate + ATP + H(+) = ADP-alpha-D-glucose + diphosphate. It participates in glycan biosynthesis; glycogen biosynthesis. Functionally, involved in the biosynthesis of ADP-glucose, a building block required for the elongation reactions to produce glycogen. Catalyzes the reaction between ATP and alpha-D-glucose 1-phosphate (G1P) to produce pyrophosphate and ADP-Glc. The protein is Glucose-1-phosphate adenylyltransferase of Pasteurella multocida (strain Pm70).